The chain runs to 290 residues: MINVVSFSGGRTSAYLLWLMEQKRRAGKDVHYVFMDTGCEHPMTYRFVREVVKFWDIPLTVLQVDINPELGQPNGYTVWEPKDIQTRMPVLKPFIDMVKKYGTPYVGGAFCTDRLKLVPFTKYCDDHFGRGNYTTWIGIRADEPKRLKPKPGIRYLAELSDFEKEDILAWWKQQPFDLQIPEHLGNCIFCIKKSTQKIGLACKDEEGLQRVFNEVITGSHVRDGHRETPKEIMYRGRMSLDGIAKMYSENDYQALYQDMVRAKRFDTGSCSESCEIFGGQLDFDFGREAA.

This is an uncharacterized protein from Escherichia phage lambda (Bacteriophage lambda).